Consider the following 458-residue polypeptide: DNA repair protein RadA (458 aa).

The C4-type zinc-finger motif lies at 10–27; sequence CQSCGYESPKWMGKCPGC. 98 to 105 is an ATP binding site; sequence GDPGIGKS. The RadA KNRFG motif signature appears at 255–259; that stretch reads KNRFG. Residues 354–458 form a lon-protease-like region; it reads DAYLKVAGGV…AEALRTSLGG (105 aa).

Belongs to the RecA family. RadA subfamily. In terms of assembly, interacts with DisA.

Its function is as follows. DNA-dependent ATPase involved in processing of recombination intermediates, plays a role in repairing DNA breaks. Stimulates the branch migration of RecA-mediated strand transfer reactions, allowing the 3' invading strand to extend heteroduplex DNA faster. Binds ssDNA in the presence of ADP but not other nucleotides, has ATPase activity that is stimulated by ssDNA and various branched DNA structures, but inhibited by SSB. Does not have RecA's homology-searching function. Plays a role in DNA repair. Might stabilize or process Holliday junction intermediates. May work with DisA following methyl methanesulfonate (MMS) but not H(2)O(2) damage; DisA is a DNA integrity scanning protein with c-di-AMP synthase activity. This chain is DNA repair protein RadA, found in Bacillus subtilis (strain 168).